A 50-amino-acid polypeptide reads, in one-letter code: Large ribosomal subunit protein bL33B (50 aa).

The protein belongs to the bacterial ribosomal protein bL33 family.

The sequence is that of Large ribosomal subunit protein bL33B from Streptococcus pyogenes serotype M1.